The sequence spans 322 residues: Sulfate adenylyltransferase subunit 2 (322 aa).

It belongs to the PAPS reductase family. CysD subfamily. As to quaternary structure, heterodimer composed of CysD, the smaller subunit, and CysN.

The catalysed reaction is sulfate + ATP + H(+) = adenosine 5'-phosphosulfate + diphosphate. It participates in sulfur metabolism; hydrogen sulfide biosynthesis; sulfite from sulfate: step 1/3. With CysN forms the ATP sulfurylase (ATPS) that catalyzes the adenylation of sulfate producing adenosine 5'-phosphosulfate (APS) and diphosphate, the first enzymatic step in sulfur assimilation pathway. APS synthesis involves the formation of a high-energy phosphoric-sulfuric acid anhydride bond driven by GTP hydrolysis by CysN coupled to ATP hydrolysis by CysD. The chain is Sulfate adenylyltransferase subunit 2 from Bradyrhizobium sp. (strain BTAi1 / ATCC BAA-1182).